Here is a 189-residue protein sequence, read N- to C-terminus: Phosphoheptose isomerase (189 aa).

In terms of domain architecture, SIS spans 33-189 (CTDTLKAGNK…ELVEREIYGG (157 aa)). 48 to 50 (NGG) lines the substrate pocket. Positions 57 and 61 each coordinate Zn(2+). Substrate is bound by residues Glu-61, 90-91 (ND), 116-118 (STS), Ser-121, and Gln-168. The Zn(2+) site is built by Gln-168 and His-176.

Belongs to the SIS family. GmhA subfamily. The cofactor is Zn(2+).

It is found in the cytoplasm. It carries out the reaction 2 D-sedoheptulose 7-phosphate = D-glycero-alpha-D-manno-heptose 7-phosphate + D-glycero-beta-D-manno-heptose 7-phosphate. The protein operates within carbohydrate biosynthesis; D-glycero-D-manno-heptose 7-phosphate biosynthesis; D-glycero-alpha-D-manno-heptose 7-phosphate and D-glycero-beta-D-manno-heptose 7-phosphate from sedoheptulose 7-phosphate: step 1/1. Functionally, catalyzes the isomerization of sedoheptulose 7-phosphate in D-glycero-D-manno-heptose 7-phosphate. This Akkermansia muciniphila (strain ATCC BAA-835 / DSM 22959 / JCM 33894 / BCRC 81048 / CCUG 64013 / CIP 107961 / Muc) protein is Phosphoheptose isomerase.